Here is a 513-residue protein sequence, read N- to C-terminus: Bifunctional purine biosynthesis protein PurH (513 aa).

The MGS-like domain occupies 1 to 144 (MSKRALISVS…KNHERVGIVV (144 aa)).

The protein belongs to the PurH family.

It carries out the reaction (6R)-10-formyltetrahydrofolate + 5-amino-1-(5-phospho-beta-D-ribosyl)imidazole-4-carboxamide = 5-formamido-1-(5-phospho-D-ribosyl)imidazole-4-carboxamide + (6S)-5,6,7,8-tetrahydrofolate. It catalyses the reaction IMP + H2O = 5-formamido-1-(5-phospho-D-ribosyl)imidazole-4-carboxamide. It functions in the pathway purine metabolism; IMP biosynthesis via de novo pathway; 5-formamido-1-(5-phospho-D-ribosyl)imidazole-4-carboxamide from 5-amino-1-(5-phospho-D-ribosyl)imidazole-4-carboxamide (10-formyl THF route): step 1/1. The protein operates within purine metabolism; IMP biosynthesis via de novo pathway; IMP from 5-formamido-1-(5-phospho-D-ribosyl)imidazole-4-carboxamide: step 1/1. This is Bifunctional purine biosynthesis protein PurH from Moorella thermoacetica (strain ATCC 39073 / JCM 9320).